Consider the following 1159-residue polypeptide: Protocadherin-17 (1159 aa).

The first 17 residues, 1-17 (MYLSICCCFLLWAPALT), serve as a signal peptide directing secretion. 6 consecutive Cadherin domains span residues 18–132 (LKNL…APSF), 133–243 (SSDQ…SPVF), 244–351 (EAPS…APSI), 353–472 (FVSV…PPRF), 473–583 (TKGL…APVI), and 589–695 (QNDT…VPRV). Residues 18 to 707 (LKNLNYSVPE…EQHHWDMSLP (690 aa)) are Extracellular-facing. Asparagine 22 carries N-linked (GlcNAc...) asparagine glycosylation. The Cell attachment site motif lies at 186-188 (RGD). N-linked (GlcNAc...) asparagine glycans are attached at residues asparagine 266, asparagine 439, asparagine 453, asparagine 504, asparagine 566, and asparagine 590. Residues 708 to 728 (LIVTLSTISIILLAAMITIAV) traverse the membrane as a helical segment. Topologically, residues 729–1159 (KCKRENKEIR…RGNDPVAVRK (431 aa)) are cytoplasmic. Disordered stretches follow at residues 858–909 (NFPA…KGSC) and 1108–1132 (SRDSSEMGAVLEQLDHPNRDLGRES). A compositionally biased stretch (polar residues) spans 867–879 (GSRQQFVQSSSTF). 2 stretches are compositionally biased toward basic and acidic residues: residues 880-895 (KDPERASLRDSGHGDS) and 1120-1132 (QLDHPNRDLGRES).

Its subcellular location is the cell membrane. Functionally, potential calcium-dependent cell-adhesion protein. In Homo sapiens (Human), this protein is Protocadherin-17 (PCDH17).